A 91-amino-acid chain; its full sequence is Insertion element IS1 7 protein InsA (91 aa).

Belongs to the IS1 elements InsA family.

In terms of biological role, absolutely required for transposition of IS1. This Escherichia coli (strain K12) protein is Insertion element IS1 7 protein InsA (insA7).